Reading from the N-terminus, the 154-residue chain is UPF0756 membrane protein RBAM_026200 (154 aa).

A run of 4 helical transmembrane segments spans residues 14–34 (AIAL…LIVI), 54–74 (WGVT…DIGF), 87–107 (WIAL…LTLL), and 117–137 (LVIG…GPLI).

This sequence belongs to the UPF0756 family.

Its subcellular location is the cell membrane. The sequence is that of UPF0756 membrane protein RBAM_026200 from Bacillus velezensis (strain DSM 23117 / BGSC 10A6 / LMG 26770 / FZB42) (Bacillus amyloliquefaciens subsp. plantarum).